A 218-amino-acid chain; its full sequence is Thymidylate kinase (218 aa).

15 to 22 (GLDRSGKS) contributes to the ATP binding site.

Belongs to the thymidylate kinase family.

The enzyme catalyses dTMP + ATP = dTDP + ADP. It functions in the pathway pyrimidine metabolism; dTTP biosynthesis. Its function is as follows. Catalyzes the conversion of dTMP to dTDP. The sequence is that of Thymidylate kinase from Caenorhabditis elegans.